The primary structure comprises 94 residues: Putative pterin-4-alpha-carbinolamine dehydratase (94 aa).

The protein belongs to the pterin-4-alpha-carbinolamine dehydratase family.

The enzyme catalyses (4aS,6R)-4a-hydroxy-L-erythro-5,6,7,8-tetrahydrobiopterin = (6R)-L-erythro-6,7-dihydrobiopterin + H2O. This chain is Putative pterin-4-alpha-carbinolamine dehydratase, found in Mycobacterium tuberculosis (strain ATCC 25177 / H37Ra).